The following is a 216-amino-acid chain: Elongation factor Ts (216 aa).

Positions 81 to 84 are involved in Mg(2+) ion dislocation from EF-Tu; that stretch reads TDFV.

Belongs to the EF-Ts family.

Its subcellular location is the cytoplasm. Its function is as follows. Associates with the EF-Tu.GDP complex and induces the exchange of GDP to GTP. It remains bound to the aminoacyl-tRNA.EF-Tu.GTP complex up to the GTP hydrolysis stage on the ribosome. The chain is Elongation factor Ts from Citrifermentans bemidjiense (strain ATCC BAA-1014 / DSM 16622 / JCM 12645 / Bem) (Geobacter bemidjiensis).